The chain runs to 355 residues: MGCTVSAEDKAAAERSKMIDKNLREDGEKAAREVKLLLLGAGESGKSTIVKQMKIIHEDGYSEEECRQYRAVVYSNTIQSIMAIVKAMGNLQIDFADPSRADDARQLFALSCTAEEQGVLPDDLSGVIRRLWADHGVQACFGRSREYQLNDSAAYYLNDLERIAQSDYIPTQQDVLRTRVKTTGIVETHFTFKDLHFKMFDVGGQRSERKKWIHCFEGVTAIIFCVALSAYDLVLAEDEEMNRMHESMKLFDSICNNKWFTDTSIILFLNKKDLFEEKITHSPLTICFPEYTGANKYDEAASYIQSKFEDLNKRKDTKEIYTHFTCATDTKNVQFVFDAVTDVIIKNNLKDCGLF.

A lipid anchor (N-myristoyl glycine) is attached at glycine 2. A lipid anchor (S-palmitoyl cysteine) is attached at cysteine 3. One can recognise a G-alpha domain in the interval 32–355 (REVKLLLLGA…KNNLKDCGLF (324 aa)). The G1 motif stretch occupies residues 35 to 48 (KLLLLGAGESGKST). Residues 40 to 47 (GAGESGKS), 176 to 182 (LRTRVKT), 201 to 205 (DVGGQ), 270 to 273 (NKKD), and alanine 327 contribute to the GTP site. Serine 47 contributes to the Mg(2+) binding site. Residues 174–182 (DVLRTRVKT) are G2 motif. The residue at position 179 (arginine 179) is an ADP-ribosylarginine; by cholera toxin. Threonine 182 is a Mg(2+) binding site. A G3 motif region spans residues 197–206 (FKMFDVGGQR). Glutamine 205 is subject to Deamidated glutamine; by Photorhabdus PAU_02230. The segment at 266–273 (ILFLNKKD) is G4 motif. The G5 motif stretch occupies residues 325–330 (TCATDT). Position 352 is an ADP-ribosylcysteine; by pertussis toxin (cysteine 352).

The protein belongs to the G-alpha family. G(i/o/t/z) subfamily. G proteins are composed of 3 units; alpha, beta and gamma. The alpha chain contains the guanine nucleotide binding site. In this context, interacts with GNB2. Interacts with GPSM1. Interacts with RGS12 and RGS14. Interacts with UNC5B. Interacts (inactive GDP-bound form) with NUCB1 (via GBA motif); the interaction leads to activation of GNAI3. Interacts (inactive GDP-bound form) with CCDC88C/DAPLE (via GBA motif). Interacts (inactive GDP-bound form) with CCDC8A/GIV (via GBA motif). Interacts with CXCR1 and CXCR2. (Microbial infection) Deamidated at Gln-205 by Photorhabdus asymbiotica toxin PAU_02230, blocking GTP hydrolysis of heterotrimeric GNAQ or GNA11 and G-alphai (GNAI1, GNAI2 or GNAI3) proteins, thereby activating RhoA.

It localises to the cytoplasm. The protein localises to the cytoskeleton. The protein resides in the microtubule organizing center. It is found in the centrosome. Its subcellular location is the cell membrane. It localises to the membrane. Guanine nucleotide-binding proteins (G proteins) are involved as modulators or transducers in various transmembrane signaling systems. The G(i) proteins are involved in hormonal regulation of adenylate cyclase: they inhibit the cyclase in response to beta-adrenergic stimuli. May play a role in cell division. Functionally, regulates the cell surface density of dopamine receptors DRD2 by sequestrating them as an intracellular pool. The protein is Guanine nucleotide-binding protein G(i) subunit alpha-2 (GNAI2) of Homo sapiens (Human).